Consider the following 448-residue polypeptide: Dual specificity mitogen-activated protein kinase kinase 5 (448 aa).

The interaction with MAPK7 stretch occupies residues 18 to 25 (VIRIKIPN). In terms of domain architecture, PB1 spans 18 to 109 (VIRIKIPNSG…EPLQIFPRAC (92 aa)). An interaction with MAP3K2/MAP3K3 region spans residues 64–68 (DEDGD). The interval 116–144 (NIHGLKVNTRAGPSQHTSPVVSDSLPSNS) is disordered. Residues 117–131 (IHGLKVNTRAGPSQH) form an interaction with MAPK7 region. The span at 126–144 (AGPSQHTSPVVSDSLPSNS) shows a compositional bias: polar residues. In terms of domain architecture, Protein kinase spans 166-419 (IRYRDTLGHG…PEELMGHPFI (254 aa)). ATP is bound by residues 172–180 (LGHGNGGTV) and Lys195. The active-site Proton acceptor is the Asp283. At Ser311 the chain carries Phosphoserine. At Thr315 the chain carries Phosphothreonine.

It belongs to the protein kinase superfamily. STE Ser/Thr protein kinase family. MAP kinase kinase subfamily. As to quaternary structure, interacts with PARD6A, MAP3K3 and MAPK7. Forms a complex with SQSTM1 and PRKCZ or PRKCI. Mg(2+) serves as cofactor. Activated by phosphorylation on Ser/Thr by MAP kinase kinase kinases.

It localises to the cytoplasm. The enzyme catalyses L-seryl-[protein] + ATP = O-phospho-L-seryl-[protein] + ADP + H(+). The catalysed reaction is L-threonyl-[protein] + ATP = O-phospho-L-threonyl-[protein] + ADP + H(+). It catalyses the reaction L-tyrosyl-[protein] + ATP = O-phospho-L-tyrosyl-[protein] + ADP + H(+). Its function is as follows. Acts as a scaffold for the formation of a ternary MAP3K2/MAP3K3-MAP3K5-MAPK7 signaling complex. Activation of this pathway appears to play a critical role in protecting cells from stress-induced apoptosis, neuronal survival and cardiac development and angiogenesis. As part of the MAPK/ERK signaling pathway, acts as a negative regulator of apoptosis in cardiomyocytes via promotion of STUB1/CHIP-mediated ubiquitination and degradation of ICER-type isoforms of CREM. The polypeptide is Dual specificity mitogen-activated protein kinase kinase 5 (Map2k5) (Mus musculus (Mouse)).